Reading from the N-terminus, the 946-residue chain is Atos homolog protein A (946 aa).

A transactivation domain 1 (TAD1) region spans residues 24–32 (ALLITEGRT). Residues 34–43 (EHSVKGRTEG) are compositionally biased toward basic and acidic residues. 4 disordered regions span residues 34–58 (EHSV…APNK), 246–271 (SVTQ…FTKP), 484–524 (FQSS…TGNQ), and 547–567 (SCTD…SQKV). Composition is skewed to polar residues over residues 247-267 (VTQP…SQHA) and 484-500 (FQSS…NENI). 2 stretches are compositionally biased toward basic and acidic residues: residues 503 to 517 (LPEK…HGEI) and 547 to 560 (SCTD…KDNP). The segment at 749–806 (LLGNFEESVLNYRFEPLGVVEGFTAEVGASGIFCPTHMTLPVKVSFYSVSDDNAPSPY) is required for macropage invasion. The transactivation domain 2 (TAD2) stretch occupies residues 833-841 (FNPNKTVVK).

This sequence belongs to the ATOS family.

Its subcellular location is the nucleus. Transcription regulator that syncronizes transcriptional and translational programs to promote macrophage invasion of tissues. The polypeptide is Atos homolog protein A (atosa) (Xenopus tropicalis (Western clawed frog)).